The primary structure comprises 360 residues: Peptide chain release factor 1 (360 aa).

The residue at position 234 (glutamine 234) is an N5-methylglutamine.

Belongs to the prokaryotic/mitochondrial release factor family. Methylated by PrmC. Methylation increases the termination efficiency of RF1.

Its subcellular location is the cytoplasm. Functionally, peptide chain release factor 1 directs the termination of translation in response to the peptide chain termination codons UAG and UAA. The polypeptide is Peptide chain release factor 1 (Renibacterium salmoninarum (strain ATCC 33209 / DSM 20767 / JCM 11484 / NBRC 15589 / NCIMB 2235)).